The primary structure comprises 145 residues: Large ribosomal subunit protein uL11 (145 aa).

The protein belongs to the universal ribosomal protein uL11 family. As to quaternary structure, part of the ribosomal stalk of the 50S ribosomal subunit. Interacts with L10 and the large rRNA to form the base of the stalk. L10 forms an elongated spine to which L12 dimers bind in a sequential fashion forming a multimeric L10(L12)X complex. Post-translationally, one or more lysine residues are methylated.

Its function is as follows. Forms part of the ribosomal stalk which helps the ribosome interact with GTP-bound translation factors. This is Large ribosomal subunit protein uL11 from Rickettsia africae (strain ESF-5).